Consider the following 624-residue polypeptide: MKGQETRGFQSEVKQLLHLMIHSLYSNKEIFLRELISNASDAADKLRFRALSNPDLYEGDGELRVRVSFDKDKRTLTISDNGVGMTRDEVIDHLGTIAKSGTKSFLESLGSDQAKDSQLIGQFGVGFYSAFIVADKVTVRTRAAGEKPENGVFWESAGEGEYTVADITKEDRGTEITLHLREGEDEFLDDWRVRSIISKYSDHIALPVEIEKREEKDGETVISWAKINKAQALWTRNKSEITDEEYKEFYKHIAHDFNDPLTWSHNRVEGKQEYTSLLYIPSQAPWDMWNRDHKHGLKLYVQRVFIMDDAEQFMPNYLRFVRGLIDSSDLPLNVSREILQDSTVTRNLRNALTKRVLQMLEKLAKDDAEKYQTFWQQFGLVLKEGPAEDFANQEAIAKLLRFASTYTDSSAQTVSLEDYVSRMKEGQEKIYYITADSYAAAKSSPHLELLRKKGIEVLLLSDRIDEWMMNYLTEFDGKPFQSVSKVDESLEKLADEVDESAKEAEKALTPFIDRVKALLGERVKDVRLTHRLTDTPAIVSTDADEMSTQMAKLFAAAGQKVPEVKYIFELNPDHVLVKRAADTEDEAKFSEWVELLLDQALLAERGTLEDPNLFIRRMNQLLVS.

The tract at residues 1 to 336 (MKGQETRGFQ…SSDLPLNVSR (336 aa)) is a; substrate-binding. The segment at 337-552 (EILQDSTVTR…ADEMSTQMAK (216 aa)) is b. Residues 553-624 (LFAAAGQKVP…IRRMNQLLVS (72 aa)) form a c region.

The protein belongs to the heat shock protein 90 family. As to quaternary structure, homodimer.

The protein resides in the cytoplasm. Functionally, molecular chaperone. Has ATPase activity. In Shigella flexneri, this protein is Chaperone protein HtpG.